A 240-amino-acid chain; its full sequence is 2,3,4,5-tetrahydropyridine-2,6-dicarboxylate N-acetyltransferase (240 aa).

It belongs to the transferase hexapeptide repeat family. DapH subfamily.

The catalysed reaction is (S)-2,3,4,5-tetrahydrodipicolinate + acetyl-CoA + H2O = L-2-acetamido-6-oxoheptanedioate + CoA. The protein operates within amino-acid biosynthesis; L-lysine biosynthesis via DAP pathway; LL-2,6-diaminopimelate from (S)-tetrahydrodipicolinate (acetylase route): step 1/3. Catalyzes the transfer of an acetyl group from acetyl-CoA to tetrahydrodipicolinate. This is 2,3,4,5-tetrahydropyridine-2,6-dicarboxylate N-acetyltransferase from Bacillus cereus (strain G9842).